The primary structure comprises 75 residues: Kappa-scoloptoxin(03)-Ssm1d (75 aa).

Residues 1–23 (MKLSMAILLVMALIIFTLDKNYS) form the signal peptide.

Belongs to the scoloptoxin-03 family. Post-translationally, contains 3 disulfide bonds. Expressed by the venom gland.

It is found in the secreted. Functionally, inhibits voltage-gated potassium channels. In Scolopendra mutilans (Chinese red-headed centipede), this protein is Kappa-scoloptoxin(03)-Ssm1d.